We begin with the raw amino-acid sequence, 162 residues long: Crossover junction endodeoxyribonuclease RuvC (162 aa).

Active-site residues include aspartate 7, glutamate 67, and aspartate 140. Mg(2+) contacts are provided by aspartate 7, glutamate 67, and aspartate 140.

This sequence belongs to the RuvC family. Homodimer which binds Holliday junction (HJ) DNA. The HJ becomes 2-fold symmetrical on binding to RuvC with unstacked arms; it has a different conformation from HJ DNA in complex with RuvA. In the full resolvosome a probable DNA-RuvA(4)-RuvB(12)-RuvC(2) complex forms which resolves the HJ. Mg(2+) serves as cofactor.

The protein resides in the cytoplasm. The enzyme catalyses Endonucleolytic cleavage at a junction such as a reciprocal single-stranded crossover between two homologous DNA duplexes (Holliday junction).. The RuvA-RuvB-RuvC complex processes Holliday junction (HJ) DNA during genetic recombination and DNA repair. Endonuclease that resolves HJ intermediates. Cleaves cruciform DNA by making single-stranded nicks across the HJ at symmetrical positions within the homologous arms, yielding a 5'-phosphate and a 3'-hydroxyl group; requires a central core of homology in the junction. The consensus cleavage sequence is 5'-(A/T)TT(C/G)-3'. Cleavage occurs on the 3'-side of the TT dinucleotide at the point of strand exchange. HJ branch migration catalyzed by RuvA-RuvB allows RuvC to scan DNA until it finds its consensus sequence, where it cleaves and resolves the cruciform DNA. This chain is Crossover junction endodeoxyribonuclease RuvC, found in Pseudothermotoga lettingae (strain ATCC BAA-301 / DSM 14385 / NBRC 107922 / TMO) (Thermotoga lettingae).